The following is a 351-amino-acid chain: Probable V-type proton ATPase subunit d (351 aa).

It belongs to the V-ATPase V0D/AC39 subunit family. As to quaternary structure, V-ATPase is a heteromultimeric enzyme composed of a peripheral catalytic V1 complex (components A to H) attached to an integral membrane V0 proton pore complex (components: a, c, c', c'' and d).

Its function is as follows. Subunit of the integral membrane V0 complex of vacuolar ATPase. Vacuolar ATPase is responsible for acidifying a variety of intracellular compartments in eukaryotic cells, thus providing most of the energy required for transport processes in the vacuolar system. This Oryza sativa subsp. japonica (Rice) protein is Probable V-type proton ATPase subunit d.